Consider the following 299-residue polypeptide: MSDEEIDISTALNNKTTPKKKSLKRNSNSQEGYESPEEREIVYPSVFGAIGTPMAKSDNAKEWDEWKEKERKKDKAEWKRYLRSKWDMTQGHLPLVSDSEFLKGRKEHKEYNSKARMDILDGLDEVNEGFFNCGKGAAMNIRYNDKNVSKKGAKKFVATVETAMKKAGNPTMEQMMTDDLDEDEARAEAEWERQREQRKLASRAYDAAMDEREDDAKYVPWDEYCQEMEELGKELKIGEKHYKKWLEKKMDENKVTHKFNAYQLDLKCLDEDAFSNKKSLKSVVRNVQKFYRKMREPKK.

Positions 1 to 38 are disordered; sequence MSDEEIDISTALNNKTTPKKKSLKRNSNSQEGYESPEE.

Expressed in mature sperm.

It localises to the cytoplasm. The protein localises to the perinuclear region. In terms of biological role, paternally sperm-supplied factor required for embryogenesis. Plays a role in preventing polyspermy possibly by promoting the formation of a continuous and cohesive eggshell chitin layer. This Caenorhabditis elegans protein is Spermatocyte protein spe-11 (spe-11).